Reading from the N-terminus, the 103-residue chain is Large ribosomal subunit protein uL24 (103 aa).

The tract at residues 70 to 103 (YLDPSTNEPTRLGVRREDGKRVRYAKKSGKDLEN) is disordered.

The protein belongs to the universal ribosomal protein uL24 family. Part of the 50S ribosomal subunit.

One of two assembly initiator proteins, it binds directly to the 5'-end of the 23S rRNA, where it nucleates assembly of the 50S subunit. Functionally, one of the proteins that surrounds the polypeptide exit tunnel on the outside of the subunit. This is Large ribosomal subunit protein uL24 from Lactiplantibacillus plantarum (strain ATCC BAA-793 / NCIMB 8826 / WCFS1) (Lactobacillus plantarum).